The chain runs to 197 residues: MPIGVPKVPFRLPGEEDAVWVDVNRLYRERLLFLGQQVDDEIANQLIGIMMYLNGEDETQDMYLYINSPGGAVLPGISVYDAMQFVVPDVHTICMGLAASMGSSILTGGEITKRIALPHARVMIHQPASSYYDGQAGECIMEAEEVLKLRDCITKVYVQRTGKPLWVISEDMERDVFMSAEEAKAYGIVDLIALETS.

Ser100 serves as the catalytic Nucleophile. His125 is an active-site residue.

Belongs to the peptidase S14 family. Component of the chloroplastic Clp protease core complex.

It is found in the plastid. It localises to the chloroplast stroma. It catalyses the reaction Hydrolysis of proteins to small peptides in the presence of ATP and magnesium. alpha-casein is the usual test substrate. In the absence of ATP, only oligopeptides shorter than five residues are hydrolyzed (such as succinyl-Leu-Tyr-|-NHMec, and Leu-Tyr-Leu-|-Tyr-Trp, in which cleavage of the -Tyr-|-Leu- and -Tyr-|-Trp bonds also occurs).. In terms of biological role, cleaves peptides in various proteins in a process that requires ATP hydrolysis. Has a chymotrypsin-like activity. Plays a major role in the degradation of misfolded proteins. The protein is ATP-dependent Clp protease proteolytic subunit of Angiopteris evecta (Mule's foot fern).